The primary structure comprises 286 residues: Urease accessory protein UreD (286 aa).

This sequence belongs to the UreD family. As to quaternary structure, ureD, UreF and UreG form a complex that acts as a GTP-hydrolysis-dependent molecular chaperone, activating the urease apoprotein by helping to assemble the nickel containing metallocenter of UreC. The UreE protein probably delivers the nickel.

The protein localises to the cytoplasm. Its function is as follows. Required for maturation of urease via the functional incorporation of the urease nickel metallocenter. In Rhodopseudomonas palustris (strain BisA53), this protein is Urease accessory protein UreD.